The chain runs to 428 residues: Histidine--tRNA ligase (428 aa).

The protein belongs to the class-II aminoacyl-tRNA synthetase family. Homodimer.

The protein localises to the cytoplasm. It carries out the reaction tRNA(His) + L-histidine + ATP = L-histidyl-tRNA(His) + AMP + diphosphate + H(+). This is Histidine--tRNA ligase from Chromohalobacter salexigens (strain ATCC BAA-138 / DSM 3043 / CIP 106854 / NCIMB 13768 / 1H11).